The chain runs to 333 residues: Threonine-phosphate decarboxylase (333 aa).

Lys199 is subject to N6-(pyridoxal phosphate)lysine.

This sequence belongs to the class-I pyridoxal-phosphate-dependent aminotransferase family. In terms of assembly, homodimer. Requires pyridoxal 5'-phosphate as cofactor.

It is found in the cytoplasm. It catalyses the reaction O-phospho-L-threonine + H(+) = (R)-1-aminopropan-2-yl phosphate + CO2. The protein operates within cofactor biosynthesis; adenosylcobalamin biosynthesis. Functionally, decarboxylates L-threonine-O-3-phosphate to yield (R)-1-amino-2-propanol O-2-phosphate, the precursor for the linkage between the nucleotide loop and the corrin ring in cobalamin. The polypeptide is Threonine-phosphate decarboxylase (cobC) (Sinorhizobium sp).